The sequence spans 311 residues: Formimidoylglutamase (311 aa).

Residues histidine 127, aspartate 152, histidine 154, aspartate 156, cysteine 236, and aspartate 238 each contribute to the Mn(2+) site.

Belongs to the arginase family. Mn(2+) is required as a cofactor.

The enzyme catalyses N-formimidoyl-L-glutamate + H2O = formamide + L-glutamate. The protein operates within amino-acid degradation; L-histidine degradation into L-glutamate; L-glutamate from N-formimidoyl-L-glutamate (hydrolase route): step 1/1. Functionally, catalyzes the conversion of N-formimidoyl-L-glutamate to L-glutamate and formamide. The sequence is that of Formimidoylglutamase from Macrococcus caseolyticus (strain JCSC5402) (Macrococcoides caseolyticum).